Reading from the N-terminus, the 266-residue chain is Syntaxin-71 (266 aa).

At 1-243 (MTVIDILTRV…TVNQLRSSRN (243 aa)) the chain is on the cytoplasmic side. Residue Ser-12 is modified to Phosphoserine. A coiled-coil region spans residues 44–87 (ETQIETALEKAELVTKEKNRAAAVAMNAEIRRTKARLSEEVPKL). Residues 122–146 (DGTAGGPKSTSAWTPSSTTSRPDIK) are disordered. Low complexity predominate over residues 130-141 (STSAWTPSSTTS). Positions 172–234 (EMRKIKQEQG…KNTNVRLKDT (63 aa)) constitute a t-SNARE coiled-coil homology domain. The helical; Anchor for type IV membrane protein transmembrane segment at 244-264 (FCIDIVLLCIVLGIAAYLYNV) threads the bilayer. The Vesicular portion of the chain corresponds to 265–266 (LK).

It belongs to the syntaxin family. In terms of assembly, part of the t-SNARE complex. Expressed in root, leaf, stem, flower and silique.

It localises to the membrane. Its function is as follows. Vesicle trafficking protein that functions in the secretory pathway. The chain is Syntaxin-71 (SYP71) from Arabidopsis thaliana (Mouse-ear cress).